A 543-amino-acid chain; its full sequence is Putative pectinesterase/pectinesterase inhibitor 22 (543 aa).

The first 19 residues, 1–19 (MGITTALLLVMLMSVHTSS), serve as a signal peptide directing secretion. A pectinesterase inhibitor 22 region spans residues 38 to 197 (AKACQFIDAH…TQLVSNVLDM (160 aa)). Residues Asn-211 and Asn-263 are each glycosylated (N-linked (GlcNAc...) asparagine). Positions 240–527 (NTVVAIDGKG…FTVGSFIDGR (288 aa)) are pectinesterase 22. Substrate-binding residues include Thr-315 and Gln-345. The Proton donor; for pectinesterase activity role is filled by Asp-368. Residues Cys-382 and Cys-402 are joined by a disulfide bond. Asp-389 acts as the Nucleophile; for pectinesterase activity in catalysis. Arg-448 and Trp-450 together coordinate substrate.

This sequence in the N-terminal section; belongs to the PMEI family. It in the C-terminal section; belongs to the pectinesterase family.

It is found in the secreted. It localises to the cell wall. The catalysed reaction is [(1-&gt;4)-alpha-D-galacturonosyl methyl ester](n) + n H2O = [(1-&gt;4)-alpha-D-galacturonosyl](n) + n methanol + n H(+). The protein operates within glycan metabolism; pectin degradation; 2-dehydro-3-deoxy-D-gluconate from pectin: step 1/5. Functionally, acts in the modification of cell walls via demethylesterification of cell wall pectin. This chain is Putative pectinesterase/pectinesterase inhibitor 22 (PME22), found in Arabidopsis thaliana (Mouse-ear cress).